The chain runs to 328 residues: MNNVDAILQAGQAAVAAAADLIELEQVKARFLGKSGELTELLKQLGKLAPEERKAAGATINQAKQAFEAAHNDKRDQLNAAKLEAQLAAEALDVTLPGRGSVGGGLHPVALTLERIAGLFRTMGFEVADGPEIESDFYNFQALNIPENHPARAMQDTFYVENCDVLRTHTSPIQARFMESHQPPIKIVAPGRVYRVDSDATHSPMFHQMEGLWVEEGVSFADLKAVVTDFLRRFFERDDLQVRFRPSFFPFTETSAEIDVLDEQGKWLEVGGCGMVHPKVLSIANIDPEKYTGFAFGIGLDRFAMLRYGVNDLRLFFENDLNFLKQFN.

A Mg(2+)-binding site is contributed by Glu-253.

Belongs to the class-II aminoacyl-tRNA synthetase family. Phe-tRNA synthetase alpha subunit type 1 subfamily. As to quaternary structure, tetramer of two alpha and two beta subunits. It depends on Mg(2+) as a cofactor.

Its subcellular location is the cytoplasm. It carries out the reaction tRNA(Phe) + L-phenylalanine + ATP = L-phenylalanyl-tRNA(Phe) + AMP + diphosphate + H(+). The polypeptide is Phenylalanine--tRNA ligase alpha subunit (Chromobacterium violaceum (strain ATCC 12472 / DSM 30191 / JCM 1249 / CCUG 213 / NBRC 12614 / NCIMB 9131 / NCTC 9757 / MK)).